Reading from the N-terminus, the 378-residue chain is Chaperone protein DnaJ (378 aa).

Residues 5 to 69 (DYYEVLGVSK…NKRANYDQFG (65 aa)) form the J domain. Residues 135-217 (GSEKEISIRK…CHGKGTENKN (83 aa)) form a CR-type zinc finger. C148, C151, C165, C168, C191, C194, C205, and C208 together coordinate Zn(2+). CXXCXGXG motif repeat units lie at residues 148–155 (CHTCDGEG), 165–172 (CHYCNGSG), 191–198 (CPVCSGSG), and 205–212 (CPTCHGKG).

The protein belongs to the DnaJ family. In terms of assembly, homodimer. Zn(2+) is required as a cofactor.

It localises to the cytoplasm. Functionally, participates actively in the response to hyperosmotic and heat shock by preventing the aggregation of stress-denatured proteins and by disaggregating proteins, also in an autonomous, DnaK-independent fashion. Unfolded proteins bind initially to DnaJ; upon interaction with the DnaJ-bound protein, DnaK hydrolyzes its bound ATP, resulting in the formation of a stable complex. GrpE releases ADP from DnaK; ATP binding to DnaK triggers the release of the substrate protein, thus completing the reaction cycle. Several rounds of ATP-dependent interactions between DnaJ, DnaK and GrpE are required for fully efficient folding. Also involved, together with DnaK and GrpE, in the DNA replication of plasmids through activation of initiation proteins. This is Chaperone protein DnaJ from Staphylococcus saprophyticus subsp. saprophyticus (strain ATCC 15305 / DSM 20229 / NCIMB 8711 / NCTC 7292 / S-41).